The following is a 347-amino-acid chain: Protein RecA (347 aa).

67–74 (GPESSGKT) is a binding site for ATP.

The protein belongs to the RecA family.

The protein resides in the cytoplasm. Its function is as follows. Can catalyze the hydrolysis of ATP in the presence of single-stranded DNA, the ATP-dependent uptake of single-stranded DNA by duplex DNA, and the ATP-dependent hybridization of homologous single-stranded DNAs. It interacts with LexA causing its activation and leading to its autocatalytic cleavage. The sequence is that of Protein RecA from Helicobacter pylori (strain G27).